The sequence spans 87 residues: Small ribosomal subunit protein bS16 (87 aa).

It belongs to the bacterial ribosomal protein bS16 family.

The chain is Small ribosomal subunit protein bS16 from Fusobacterium nucleatum subsp. nucleatum (strain ATCC 25586 / DSM 15643 / BCRC 10681 / CIP 101130 / JCM 8532 / KCTC 2640 / LMG 13131 / VPI 4355).